Here is a 567-residue protein sequence, read N- to C-terminus: Proline--tRNA ligase (567 aa).

Belongs to the class-II aminoacyl-tRNA synthetase family. ProS type 1 subfamily. As to quaternary structure, homodimer.

Its subcellular location is the cytoplasm. It catalyses the reaction tRNA(Pro) + L-proline + ATP = L-prolyl-tRNA(Pro) + AMP + diphosphate. Catalyzes the attachment of proline to tRNA(Pro) in a two-step reaction: proline is first activated by ATP to form Pro-AMP and then transferred to the acceptor end of tRNA(Pro). As ProRS can inadvertently accommodate and process non-cognate amino acids such as alanine and cysteine, to avoid such errors it has two additional distinct editing activities against alanine. One activity is designated as 'pretransfer' editing and involves the tRNA(Pro)-independent hydrolysis of activated Ala-AMP. The other activity is designated 'posttransfer' editing and involves deacylation of mischarged Ala-tRNA(Pro). The misacylated Cys-tRNA(Pro) is not edited by ProRS. The sequence is that of Proline--tRNA ligase from Geobacillus sp. (strain WCH70).